The primary structure comprises 62 residues: Bacteriocin pediocin PA-1 (62 aa).

Residues 1 to 18 (MKKIEKLTEKEMANIIGG) constitute a propeptide that is removed on maturation. 2 cysteine pairs are disulfide-bonded: cysteine 27/cysteine 32 and cysteine 42/cysteine 62. The segment at 40-52 (TTCIINNGAMAWA) is hydrophobic.

Belongs to the bacteriocin class IIA/YGNGV family.

It localises to the secreted. Its function is as follows. Bactericidal activity (effective inhibitor of L.monocytogenes). The sequence is that of Bacteriocin pediocin PA-1 (pedA) from Pediococcus acidilactici.